The sequence spans 275 residues: Large ribosomal subunit protein uL2cz (275 aa).

2 disordered regions span residues 1-20 (MAIH…AVDS) and 225-275 (NPVD…RRSK).

Belongs to the universal ribosomal protein uL2 family. As to quaternary structure, part of the 50S ribosomal subunit.

It is found in the plastid. It localises to the chloroplast. The protein is Large ribosomal subunit protein uL2cz (rpl2-A) of Populus alba (White poplar).